The sequence spans 268 residues: MYLKRNIINMQRSFSRQFHISVRNSIQSSKPLSNSTPLKGCSVGTILIRSPILTRQPSEFEKSIYKYNAELWNELSDPLPAEFYFKKGSVGEKDWQERQKTLKGKESPFETIFGKERKEMESNKLLDSATHLQSRVTEADTKNDERSTLRSLDKSLYLLVKKSKSSGWQFPNTPVTSSEKALHLLCQDLLKNILDENSLTWLVARHPLALLKTEQEKTFLLRARLLNGLDVPNLQNVYDWVWCTYDELKNKLSPSSWDSVKNILSDRL.

The transit peptide at 1–25 directs the protein to the mitochondrion; that stretch reads MYLKRNIINMQRSFSRQFHISVRNS.

It belongs to the mitochondrion-specific ribosomal protein mL46 family. In terms of assembly, component of the mitochondrial large ribosomal subunit (mt-LSU). Mature yeast 74S mitochondrial ribosomes consist of a small (37S) and a large (54S) subunit. The 37S small subunit contains a 15S ribosomal RNA (15S mt-rRNA) and at least 32 different proteins. The 54S large subunit contains a 21S rRNA (21S mt-rRNA) and at least 45 different proteins.

It is found in the mitochondrion. In terms of biological role, component of the mitochondrial ribosome (mitoribosome), a dedicated translation machinery responsible for the synthesis of mitochondrial genome-encoded proteins, including at least some of the essential transmembrane subunits of the mitochondrial respiratory chain. The mitoribosomes are attached to the mitochondrial inner membrane and translation products are cotranslationally integrated into the membrane. In Schizosaccharomyces pombe (strain 972 / ATCC 24843) (Fission yeast), this protein is Large ribosomal subunit protein mL46 (mrpl17).